The primary structure comprises 270 residues: Bark lectin (270 aa).

An N-terminal signal peptide occupies residues 1 to 15; sequence ISITFFLLLLNKVNS. Residues N60, N76, and N127 are each glycosylated (N-linked (GlcNAc...) asparagine). Residues E141 and D143 each contribute to the Mn(2+) site. 4 residues coordinate Ca(2+): D143, H145, N147, and D150. Mn(2+) is bound by residues D150 and H155. The N-linked (GlcNAc...) asparagine glycan is linked to N201.

This sequence belongs to the leguminous lectin family.

Its function is as follows. GalNAc-specific lectin. The polypeptide is Bark lectin (Styphnolobium japonicum (Japanese pagoda tree)).